Here is a 224-residue protein sequence, read N- to C-terminus: UPF0758 protein LCA_0852 (224 aa).

The region spanning 100-222 (VVASSQMVGQ…YLSLREEGYL (123 aa)) is the MPN domain. Histidine 171, histidine 173, and aspartate 184 together coordinate Zn(2+). Residues 171–184 (HNHPSGQLAPSTQD) carry the JAMM motif motif.

This sequence belongs to the UPF0758 family.

The protein is UPF0758 protein LCA_0852 of Latilactobacillus sakei subsp. sakei (strain 23K) (Lactobacillus sakei subsp. sakei).